A 460-amino-acid chain; its full sequence is CCA-adding enzyme (460 aa).

ATP is bound by residues S50 and R53. S50 and R53 together coordinate CTP. Mg(2+) is bound by residues D62, D64, and D117. H140, K159, and Y168 together coordinate ATP. CTP contacts are provided by H140, K159, and Y168.

It belongs to the tRNA nucleotidyltransferase/poly(A) polymerase family. Archaeal CCA-adding enzyme subfamily. In terms of assembly, homodimer. Mg(2+) is required as a cofactor.

The catalysed reaction is a tRNA precursor + 2 CTP + ATP = a tRNA with a 3' CCA end + 3 diphosphate. The enzyme catalyses a tRNA with a 3' CCA end + 2 CTP + ATP = a tRNA with a 3' CCACCA end + 3 diphosphate. Functionally, catalyzes the addition and repair of the essential 3'-terminal CCA sequence in tRNAs without using a nucleic acid template. Adds these three nucleotides in the order of C, C, and A to the tRNA nucleotide-73, using CTP and ATP as substrates and producing inorganic pyrophosphate. tRNA 3'-terminal CCA addition is required both for tRNA processing and repair. Also involved in tRNA surveillance by mediating tandem CCA addition to generate a CCACCA at the 3' terminus of unstable tRNAs. While stable tRNAs receive only 3'-terminal CCA, unstable tRNAs are marked with CCACCA and rapidly degraded. The chain is CCA-adding enzyme from Methanoregula boonei (strain DSM 21154 / JCM 14090 / 6A8).